We begin with the raw amino-acid sequence, 777 residues long: Ethylene receptor 4 (777 aa).

Helical transmembrane passes span 49–69 (LLIA…ATCA), 77–97 (AVLH…LAAF), and 113–133 (AAKV…LTFI). 2 residues coordinate Cu cation: Cys88 and His92. The GAF domain maps to 184–344 (DAHAILRTTA…VVADQAAVAL (161 aa)). The Histidine kinase domain maps to 387–521 (AMCHAMRRPV…NTGSGACRLS (135 aa)). Residue His390 is modified to Phosphohistidine; by autocatalysis. The Response regulatory domain occupies 645–774 (RVLLADDDAM…ALGAQLCRVL (130 aa)). Asp696 carries the 4-aspartylphosphate modification.

Belongs to the ethylene receptor family. Cu cation is required as a cofactor.

The protein resides in the endoplasmic reticulum membrane. It catalyses the reaction ATP + protein L-histidine = ADP + protein N-phospho-L-histidine.. Ethylene receptor related to bacterial two-component regulators. Acts as a redundant negative regulator of ethylene signaling. The polypeptide is Ethylene receptor 4 (ETR4) (Oryza sativa subsp. japonica (Rice)).